Here is a 335-residue protein sequence, read N- to C-terminus: Nucleoid-associated protein PputGB1_0980 (335 aa).

Belongs to the YejK family.

It localises to the cytoplasm. The protein resides in the nucleoid. This chain is Nucleoid-associated protein PputGB1_0980, found in Pseudomonas putida (strain GB-1).